A 426-amino-acid polypeptide reads, in one-letter code: Glutamate-1-semialdehyde 2,1-aminomutase (426 aa).

Residue Lys-265 is modified to N6-(pyridoxal phosphate)lysine.

Belongs to the class-III pyridoxal-phosphate-dependent aminotransferase family. HemL subfamily. In terms of assembly, homodimer. It depends on pyridoxal 5'-phosphate as a cofactor.

Its subcellular location is the cytoplasm. The enzyme catalyses (S)-4-amino-5-oxopentanoate = 5-aminolevulinate. It participates in porphyrin-containing compound metabolism; protoporphyrin-IX biosynthesis; 5-aminolevulinate from L-glutamyl-tRNA(Glu): step 2/2. In Neisseria gonorrhoeae (strain NCCP11945), this protein is Glutamate-1-semialdehyde 2,1-aminomutase.